Here is a 348-residue protein sequence, read N- to C-terminus: tRNA N6-adenosine threonylcarbamoyltransferase (348 aa).

Residues His-109 and His-113 each coordinate Fe cation. Residues 136 to 140, Asp-169, Gly-182, Asp-186, and Asn-284 contribute to the substrate site; that span reads TVSGG. Residue Asp-312 participates in Fe cation binding.

This sequence belongs to the KAE1 / TsaD family. Fe(2+) is required as a cofactor.

The protein localises to the cytoplasm. The enzyme catalyses L-threonylcarbamoyladenylate + adenosine(37) in tRNA = N(6)-L-threonylcarbamoyladenosine(37) in tRNA + AMP + H(+). Its function is as follows. Required for the formation of a threonylcarbamoyl group on adenosine at position 37 (t(6)A37) in tRNAs that read codons beginning with adenine. Is involved in the transfer of the threonylcarbamoyl moiety of threonylcarbamoyl-AMP (TC-AMP) to the N6 group of A37, together with TsaE and TsaB. TsaD likely plays a direct catalytic role in this reaction. The sequence is that of tRNA N6-adenosine threonylcarbamoyltransferase from Chlorobium luteolum (strain DSM 273 / BCRC 81028 / 2530) (Pelodictyon luteolum).